The following is a 581-amino-acid chain: Kelch-like protein 30 (581 aa).

Residues 33-100 form the BTB domain; the sequence is ADVTLLVGDQ…VYTGRLTITQ (68 aa). In terms of domain architecture, BACK spans 135-237; the sequence is CLGICEFGEQ…PRPCVQQLLA (103 aa). Kelch repeat units lie at residues 280–327, 328–378, 379–423, 425–472, 474–514, and 515–564; these read EEDE…ALNS, DVYV…ALNG, EIYA…GCQG, LYLV…ALNG, LYLI…PLGD, and LLYV…TIFL.

The sequence is that of Kelch-like protein 30 (Klhl30) from Mus musculus (Mouse).